Here is a 176-residue protein sequence, read N- to C-terminus: RNA pyrophosphohydrolase (176 aa).

In terms of domain architecture, Nudix hydrolase spans 6–149; the sequence is GYRPNVGIVI…KRDVYRRVMK (144 aa). A Nudix box motif is present at residues 38 to 59; it reads GGINPGESAEQAMYRELFEEVG.

It belongs to the Nudix hydrolase family. RppH subfamily. A divalent metal cation serves as cofactor.

In terms of biological role, accelerates the degradation of transcripts by removing pyrophosphate from the 5'-end of triphosphorylated RNA, leading to a more labile monophosphorylated state that can stimulate subsequent ribonuclease cleavage. In Salmonella arizonae (strain ATCC BAA-731 / CDC346-86 / RSK2980), this protein is RNA pyrophosphohydrolase.